A 189-amino-acid chain; its full sequence is Interleukin-23 subunit alpha (189 aa).

A signal peptide spans 1 to 19 (MLGSRAVMLLLLLPWTAQG). Cysteines 77 and 89 form a disulfide.

This sequence belongs to the IL-6 superfamily. In terms of assembly, heterodimer with IL12B; disulfide-linked. The heterodimer is known as interleukin IL-23. Interacts with IL23R; this interaction enables recruitment of IL12RB1. Secreted by activated dendritic and phagocytic cells and keratinocytes. Also expressed by dermal Langerhans cells (at protein level).

Its subcellular location is the secreted. Functionally, associates with IL12B to form the pro-inflammatory cytokine IL-23 that plays different roles in innate and adaptive immunity. Released by antigen-presenting cells such as dendritic cells or macrophages, binds to a heterodimeric receptor complex composed of IL12RB1 and IL23R to activate JAK2 and TYK2 which then phosphorylate the receptor to form a docking site leading to the phosphorylation of STAT3 and STAT4. This process leads to activation of several pathways including p38 MAPK or NF-kappa-B and promotes the production of pro-inflammatory cytokines such as interleukin-17A/IL17A. In turn, participates in the early and effective intracellular bacterial clearance. Promotes the expansion and survival of T-helper 17 cells, a CD4-positive helper T-cell subset that produces IL-17, as well as other IL-17-producing cells. The polypeptide is Interleukin-23 subunit alpha (IL23A) (Homo sapiens (Human)).